We begin with the raw amino-acid sequence, 81 residues long: Small ribosomal subunit protein bS16 (81 aa).

This sequence belongs to the bacterial ribosomal protein bS16 family.

This Coprothermobacter proteolyticus (strain ATCC 35245 / DSM 5265 / OCM 4 / BT) protein is Small ribosomal subunit protein bS16.